A 260-amino-acid polypeptide reads, in one-letter code: Small ribosomal subunit protein eS1 (260 aa).

At alanine 2 the chain carries N-acetylalanine; partial.

Belongs to the eukaryotic ribosomal protein eS1 family. As to quaternary structure, component of the small ribosomal subunit. Mature ribosomes consist of a small (40S) and a large (60S) subunit. The 40S subunit contains about 33 different proteins and 1 molecule of RNA (18S). The 60S subunit contains about 49 different proteins and 3 molecules of RNA (25S, 5.8S and 5S).

It is found in the cytoplasm. The chain is Small ribosomal subunit protein eS1 from Mycosarcoma maydis (Corn smut fungus).